A 137-amino-acid chain; its full sequence is MLSPKKVKFRKRQKGRLKGKAQRGSSIAFGDIAIKTLEHGKLTNNQIEAARVAIMRHIKRGGQVWIRVFPDMPITAKPAEVRQGKGKGSPVGWVAPVKPGRILYEVKGVDIELAREALVRASHKLPVKTTIVVKEGL.

Over residues 1–21 the composition is skewed to basic residues; that stretch reads MLSPKKVKFRKRQKGRLKGKA. The interval 1–22 is disordered; the sequence is MLSPKKVKFRKRQKGRLKGKAQ.

It belongs to the universal ribosomal protein uL16 family. Part of the 50S ribosomal subunit.

In terms of biological role, binds 23S rRNA and is also seen to make contacts with the A and possibly P site tRNAs. This chain is Large ribosomal subunit protein uL16, found in Maridesulfovibrio salexigens (strain ATCC 14822 / DSM 2638 / NCIMB 8403 / VKM B-1763) (Desulfovibrio salexigens).